A 587-amino-acid polypeptide reads, in one-letter code: Glutamine--tRNA ligase (587 aa).

A 'HIGH' region motif is present at residues 58–68 (PEPNGYLHIGH). Residues 59-61 (EPN) and 65-71 (HIGHAKS) each bind ATP. Residues aspartate 91 and tyrosine 240 each contribute to the L-glutamine site. ATP contacts are provided by residues threonine 259 and 294 to 295 (RL). A 'KMSKS' region motif is present at residues 301–305 (VTSKR).

It belongs to the class-I aminoacyl-tRNA synthetase family. As to quaternary structure, monomer.

Its subcellular location is the cytoplasm. The catalysed reaction is tRNA(Gln) + L-glutamine + ATP = L-glutaminyl-tRNA(Gln) + AMP + diphosphate. This is Glutamine--tRNA ligase from Bordetella parapertussis (strain 12822 / ATCC BAA-587 / NCTC 13253).